The primary structure comprises 325 residues: Biotin synthase (325 aa).

The 230-residue stretch at 49-278 (FNGNIVDLCS…KASIRLAGGR (230 aa)) folds into the Radical SAM core domain. Cysteine 67, cysteine 71, and cysteine 74 together coordinate [4Fe-4S] cluster. [2Fe-2S] cluster is bound by residues serine 111, cysteine 143, cysteine 203, and arginine 273.

The protein belongs to the radical SAM superfamily. Biotin synthase family. In terms of assembly, homodimer. The cofactor is [4Fe-4S] cluster. [2Fe-2S] cluster serves as cofactor.

The enzyme catalyses (4R,5S)-dethiobiotin + (sulfur carrier)-SH + 2 reduced [2Fe-2S]-[ferredoxin] + 2 S-adenosyl-L-methionine = (sulfur carrier)-H + biotin + 2 5'-deoxyadenosine + 2 L-methionine + 2 oxidized [2Fe-2S]-[ferredoxin]. It functions in the pathway cofactor biosynthesis; biotin biosynthesis; biotin from 7,8-diaminononanoate: step 2/2. Its function is as follows. Catalyzes the conversion of dethiobiotin (DTB) to biotin by the insertion of a sulfur atom into dethiobiotin via a radical-based mechanism. This chain is Biotin synthase, found in Clostridium tetani (strain Massachusetts / E88).